The following is a 636-amino-acid chain: Putative cysteine-rich receptor-like protein kinase 33 (636 aa).

The signal sequence occupies residues 1 to 25; the sequence is MRKTKKISFLIFWVVLISIIGAISS. Gnk2-homologous domains follow at residues 26 to 128 and 138 to 245; these read QQCN…NSSF and YMEH…LYPF. Residues 26–266 are Extracellular-facing; that stretch reads QQCNETGYFE…PGSKRNISVG (241 aa). 10 N-linked (GlcNAc...) asparagine glycosylation sites follow: asparagine 29, asparagine 63, asparagine 105, asparagine 125, asparagine 149, asparagine 173, asparagine 185, asparagine 188, asparagine 250, and asparagine 262. The chain crosses the membrane as a helical span at residues 267-287; the sequence is FFVAIVVATGVVISVLSTLVV. Over 288 to 636 the chain is Cytoplasmic; sequence VLVCRKRKTD…DSLIDDLVPR (349 aa). One can recognise a Protein kinase domain in the interval 321-600; it reads FSKCNMLGQG…MMLTSNSITL (280 aa). ATP is bound by residues 327–335 and lysine 349; that span reads LGQGGFGEV. Tyrosine 394 carries the post-translational modification Phosphotyrosine. Aspartate 446 acts as the Proton acceptor in catalysis. Serine 450 is subject to Phosphoserine. Threonine 486 is subject to Phosphothreonine. Tyrosine 494 is modified (phosphotyrosine).

This sequence belongs to the protein kinase superfamily. Ser/Thr protein kinase family. CRK subfamily.

It is found in the membrane. The catalysed reaction is L-seryl-[protein] + ATP = O-phospho-L-seryl-[protein] + ADP + H(+). It catalyses the reaction L-threonyl-[protein] + ATP = O-phospho-L-threonyl-[protein] + ADP + H(+). In Arabidopsis thaliana (Mouse-ear cress), this protein is Putative cysteine-rich receptor-like protein kinase 33 (CRK33).